Here is a 103-residue protein sequence, read N- to C-terminus: MYAVIVTGGKQHKVTEGEFLKVEKLDIATGEAIDFDRVLLVANGDDVKIGLPVVEGAKVTAEVVSHGRHDKVRIIKFRRRKHHMKRQGHRQWFTEIKITGIQA.

It belongs to the bacterial ribosomal protein bL21 family. As to quaternary structure, part of the 50S ribosomal subunit. Contacts protein L20.

Its function is as follows. This protein binds to 23S rRNA in the presence of protein L20. The polypeptide is Large ribosomal subunit protein bL21 (Pseudomonas paraeruginosa (strain DSM 24068 / PA7) (Pseudomonas aeruginosa (strain PA7))).